A 409-amino-acid chain; its full sequence is MAQNFTKLNPQFENIIFEHDDNQMVLNFGPQHPSSHGQLRLILELEGERIIKATPEIGYLHRGCEKLGENMTYNEYMPTTDRLDYTSSASNNYAYAHAVETLLNLEIPRRAQVIRTILLELNRMISHIFFISVHALDVGAMSVFLYAFKTREHGLDLMEDYCGARLTHNAIRIGGVPLDLPPNWLEGLKKFLGEMRECKKLIQGLLDKNRIWRMRLENVGVVTPKMAQSWGMSGIMLRGTGIAYDIRKEEPYELYRELDFDVPVGNYGDSYDRYCLYMLEIDESIRIIEQLIPMYAKTDTPIMAQNPHYISAPKEDIMTQNYALMQHFVLVAQGMRPPIGEVYAPTESPKGELGFFIHSEGESYPHRLKIRAPSFYHIGSLGDILVGQYLADAVTVIGSTNAVFGEVDR.

Belongs to the complex I 49 kDa subunit family. In terms of assembly, NDH-1 is composed of 14 different subunits. Subunits NuoB, C, D, E, F, and G constitute the peripheral sector of the complex.

The protein localises to the cell inner membrane. The catalysed reaction is a quinone + NADH + 5 H(+)(in) = a quinol + NAD(+) + 4 H(+)(out). Functionally, NDH-1 shuttles electrons from NADH, via FMN and iron-sulfur (Fe-S) centers, to quinones in the respiratory chain. The immediate electron acceptor for the enzyme in this species is believed to be ubiquinone. Couples the redox reaction to proton translocation (for every two electrons transferred, four hydrogen ions are translocated across the cytoplasmic membrane), and thus conserves the redox energy in a proton gradient. This Helicobacter acinonychis (strain Sheeba) protein is NADH-quinone oxidoreductase subunit D.